The following is a 348-amino-acid chain: MLFLKLVASVLALMTIVPAQAGLIGKRSVFKPKVMIINMFSLEANAWLSQMDDLYANNITVVGLNRLYPQVHCNTQQTICQMTTGEGKSNAASSIMALTLSPKFDLTETFFLISGIAGINPYAASLGSVGVARFAVDIDLINSVDLRELPSYFQSSGWEIDTDPYENGSSNEIVYPESMPYQTNLYELNNTLITAAMEIIKDVVLEDNEKAASYRKLYNESAARRPPFITQCDTATGDNYWAGTYMGDFVSNITNVLTNSTGHYCTTQQEDNASLTALTRASFDGLVNINRVVIMRSGSDFDRGAGNITALANLLNSTGHVSSLACDNLYHAGAPLIDHIVNHWSYWT.

The N-terminal stretch at Met-1–Ala-21 is a signal peptide.

The protein belongs to the NUP family.

The protein resides in the endoplasmic reticulum. Probable nucleoside permease that transports adenosine and guanosine. This is Probable purine nucleoside permease C285.05 from Schizosaccharomyces pombe (strain 972 / ATCC 24843) (Fission yeast).